A 328-amino-acid chain; its full sequence is Arabinose 5-phosphate isomerase KdsD (328 aa).

The 143-residue stretch at 42–184 (CEKMFWCKGK…AVALLKARGF (143 aa)) folds into the SIS domain. Substrate contacts are provided by residues 75–76 (GT), histidine 82, histidine 88, 114–123 (ALIPVLKRLH), 148–150 (KVA), threonine 222, and aspartate 275. A Zn(2+)-binding site is contributed by histidine 82. Positions 210–268 (MHTGDEIPHVKKTASLRDALLEVTRKNLGMTVICDDNMMIEGIFTDGDLRRVFDMGVDV) constitute a CBS 1 domain. Residues 277–328 (MTPGGIRVRPGILAVEALNLMQSRHITSVMVADGDHLLGVLHMHDLLRAGVV) form the CBS 2 domain.

It belongs to the SIS family. GutQ/KpsF subfamily. In terms of assembly, homotetramer.

The enzyme catalyses D-arabinose 5-phosphate = D-ribulose 5-phosphate. Its pathway is carbohydrate biosynthesis; 3-deoxy-D-manno-octulosonate biosynthesis; 3-deoxy-D-manno-octulosonate from D-ribulose 5-phosphate: step 1/3. It functions in the pathway bacterial outer membrane biogenesis; lipopolysaccharide biosynthesis. Involved in the biosynthesis of 3-deoxy-D-manno-octulosonate (KDO), a unique 8-carbon sugar component of lipopolysaccharides (LPSs). Catalyzes the reversible aldol-ketol isomerization between D-ribulose 5-phosphate (Ru5P) and D-arabinose 5-phosphate (A5P). The sequence is that of Arabinose 5-phosphate isomerase KdsD (kdsD) from Escherichia coli O157:H7.